A 686-amino-acid chain; its full sequence is MAM domain-containing protein 2 (686 aa).

A signal peptide spans 1-18 (MLLEGVLLVVQALQLASA). MAM domains lie at 24 to 169 (GSCA…YCIE), 168 to 329 (IECD…HCQN), 340 to 498 (TSCD…NCRS), and 507 to 666 (GECT…PCAG). Residues Asn134 and Asn329 are each glycosylated (N-linked (GlcNAc...) asparagine). Asn524 carries an N-linked (GlcNAc...) asparagine glycan. Residues 665-686 (AGMEDTTEQSSGYSEDLNEIEY) form a disordered region.

Post-translationally, O-glycosylated; contains chondroitin sulfate.

Its subcellular location is the secreted. The protein resides in the extracellular space. The protein localises to the extracellular matrix. The polypeptide is MAM domain-containing protein 2 (Mamdc2) (Mus musculus (Mouse)).